The chain runs to 645 residues: 1,4-alpha-glucan branching enzyme GlgB (645 aa).

The active-site Nucleophile is the aspartate 309. The active-site Proton donor is the glutamate 352. Positions 621 to 645 (MRKGSKKQDGKKAELRSNATSRRKR) are disordered. Basic and acidic residues predominate over residues 626–635 (KKQDGKKAEL).

Belongs to the glycosyl hydrolase 13 family. GlgB subfamily. As to quaternary structure, monomer.

It catalyses the reaction Transfers a segment of a (1-&gt;4)-alpha-D-glucan chain to a primary hydroxy group in a similar glucan chain.. Its pathway is glycan biosynthesis; glycogen biosynthesis. Its function is as follows. Catalyzes the formation of the alpha-1,6-glucosidic linkages in glycogen by scission of a 1,4-alpha-linked oligosaccharide from growing alpha-1,4-glucan chains and the subsequent attachment of the oligosaccharide to the alpha-1,6 position. This chain is 1,4-alpha-glucan branching enzyme GlgB, found in Bacillus cytotoxicus (strain DSM 22905 / CIP 110041 / 391-98 / NVH 391-98).